Here is a 457-residue protein sequence, read N- to C-terminus: ATP synthase subunit beta (457 aa).

147–154 (GGAGVGKT) contributes to the ATP binding site.

This sequence belongs to the ATPase alpha/beta chains family. As to quaternary structure, F-type ATPases have 2 components, CF(1) - the catalytic core - and CF(0) - the membrane proton channel. CF(1) has five subunits: alpha(3), beta(3), gamma(1), delta(1), epsilon(1). CF(0) has three main subunits: a(1), b(2) and c(9-12). The alpha and beta chains form an alternating ring which encloses part of the gamma chain. CF(1) is attached to CF(0) by a central stalk formed by the gamma and epsilon chains, while a peripheral stalk is formed by the delta and b chains.

The protein localises to the cell inner membrane. The catalysed reaction is ATP + H2O + 4 H(+)(in) = ADP + phosphate + 5 H(+)(out). Produces ATP from ADP in the presence of a proton gradient across the membrane. The catalytic sites are hosted primarily by the beta subunits. The polypeptide is ATP synthase subunit beta (Actinobacillus pleuropneumoniae serotype 5b (strain L20)).